The primary structure comprises 162 residues: 18.5 kDa class IV heat shock protein (162 aa).

The sHSP domain occupies 53–149 (TSSSTVNTQL…PPQLPEIEEN (97 aa)).

This sequence belongs to the small heat shock protein (HSP20) family. In terms of assembly, may form oligomeric structures.

The protein localises to the cytoplasm. In Arabidopsis thaliana (Mouse-ear cress), this protein is 18.5 kDa class IV heat shock protein (HSP18.5).